Consider the following 272-residue polypeptide: Indole-3-glycerol phosphate synthase (272 aa).

This sequence belongs to the TrpC family.

The catalysed reaction is 1-(2-carboxyphenylamino)-1-deoxy-D-ribulose 5-phosphate + H(+) = (1S,2R)-1-C-(indol-3-yl)glycerol 3-phosphate + CO2 + H2O. Its pathway is amino-acid biosynthesis; L-tryptophan biosynthesis; L-tryptophan from chorismate: step 4/5. The chain is Indole-3-glycerol phosphate synthase from Mycolicibacterium gilvum (strain PYR-GCK) (Mycobacterium gilvum (strain PYR-GCK)).